The following is a 398-amino-acid chain: Succinyl-diaminopimelate desuccinylase (398 aa).

H68 provides a ligand contact to Zn(2+). D70 is a catalytic residue. A Zn(2+)-binding site is contributed by D101. The Proton acceptor role is filled by E135. Zn(2+)-binding residues include E136, E164, and H349.

This sequence belongs to the peptidase M20A family. DapE subfamily. Homodimer. The cofactor is Zn(2+). Co(2+) serves as cofactor.

It catalyses the reaction N-succinyl-(2S,6S)-2,6-diaminopimelate + H2O = (2S,6S)-2,6-diaminopimelate + succinate. Its pathway is amino-acid biosynthesis; L-lysine biosynthesis via DAP pathway; LL-2,6-diaminopimelate from (S)-tetrahydrodipicolinate (succinylase route): step 3/3. Functionally, catalyzes the hydrolysis of N-succinyl-L,L-diaminopimelic acid (SDAP), forming succinate and LL-2,6-diaminopimelate (DAP), an intermediate involved in the bacterial biosynthesis of lysine and meso-diaminopimelic acid, an essential component of bacterial cell walls. The sequence is that of Succinyl-diaminopimelate desuccinylase from Wolbachia pipientis wMel.